We begin with the raw amino-acid sequence, 730 residues long: Phosphoribosylformylglycinamidine synthase subunit PurL (730 aa).

H44 is an active-site residue. The ATP site is built by Y47 and K86. Mg(2+) is bound at residue E88. Substrate contacts are provided by residues 89–92 (SHNH) and R111. Catalysis depends on H90, which acts as the Proton acceptor. D112 is a binding site for Mg(2+). A substrate-binding site is contributed by Q235. Position 263 (D263) interacts with Mg(2+). 307–309 (ESQ) provides a ligand contact to substrate. ATP is bound by residues N489 and G526. Residue N527 coordinates Mg(2+). S529 contacts substrate.

Belongs to the FGAMS family. Monomer. Part of the FGAM synthase complex composed of 1 PurL, 1 PurQ and 2 PurS subunits.

The protein localises to the cytoplasm. It carries out the reaction N(2)-formyl-N(1)-(5-phospho-beta-D-ribosyl)glycinamide + L-glutamine + ATP + H2O = 2-formamido-N(1)-(5-O-phospho-beta-D-ribosyl)acetamidine + L-glutamate + ADP + phosphate + H(+). It participates in purine metabolism; IMP biosynthesis via de novo pathway; 5-amino-1-(5-phospho-D-ribosyl)imidazole from N(2)-formyl-N(1)-(5-phospho-D-ribosyl)glycinamide: step 1/2. Part of the phosphoribosylformylglycinamidine synthase complex involved in the purines biosynthetic pathway. Catalyzes the ATP-dependent conversion of formylglycinamide ribonucleotide (FGAR) and glutamine to yield formylglycinamidine ribonucleotide (FGAM) and glutamate. The FGAM synthase complex is composed of three subunits. PurQ produces an ammonia molecule by converting glutamine to glutamate. PurL transfers the ammonia molecule to FGAR to form FGAM in an ATP-dependent manner. PurS interacts with PurQ and PurL and is thought to assist in the transfer of the ammonia molecule from PurQ to PurL. This is Phosphoribosylformylglycinamidine synthase subunit PurL from Pelagibacter ubique (strain HTCC1062).